The sequence spans 632 residues: Extracellular metalloproteinase 1 (632 aa).

The first 19 residues, 1–19 (MHGLLLAAGLLSLPLRVLA), serve as a signal peptide directing secretion. The propeptide occupies 20 to 243 (HPQPSTSLTS…VHNVVDYVSH (224 aa)). N-linked (GlcNAc...) asparagine glycosylation occurs at N284. H427 lines the Zn(2+) pocket. E428 is an active-site residue. H431 lines the Zn(2+) pocket. N-linked (GlcNAc...) asparagine glycans are attached at residues N591 and N620.

It belongs to the peptidase M36 family. Zn(2+) serves as cofactor.

It localises to the secreted. Functionally, secreted metalloproteinase that allows assimilation of proteinaceous substrates and probably acts as a virulence factor. This chain is Extracellular metalloproteinase 1 (MEP1), found in Arthroderma gypseum (strain ATCC MYA-4604 / CBS 118893) (Microsporum gypseum).